We begin with the raw amino-acid sequence, 185 residues long: Homeobox expressed in ES cells 1 (185 aa).

The segment at residues 108-167 is a DNA-binding region (homeobox); that stretch reads GRRPRTAFTQNQIEVLENVFRVNCYPGIDIREDLAQKLNLEEDRIQIWFQNRRAKLKRSH.

Belongs to the ANF homeobox family. As to quaternary structure, can form heterodimers with PROP1 in binding to DNA. Interacts with TLE1.

The protein resides in the nucleus. Functionally, required for the normal development of the forebrain, eyes and other anterior structures such as the olfactory placodes and pituitary gland. Possible transcriptional repressor. Binds to the palindromic PIII sequence, 5'-AGCTTGAGTCTAATTGAATTAACTGTAC-3'. HESX1 and PROP1 bind as heterodimers on this palindromic site, and, in vitro, HESX1 can antagonize PROP1 activation. The chain is Homeobox expressed in ES cells 1 (HESX1) from Pan troglodytes (Chimpanzee).